The following is a 174-amino-acid chain: RNA pyrophosphohydrolase (174 aa).

Residues 6-149 (GFRANVGIII…KRDVYRKVMK (144 aa)) form the Nudix hydrolase domain. A Nudix box motif is present at residues 38 to 59 (GGVDDGETAEEAMYRELYEEVG).

This sequence belongs to the Nudix hydrolase family. RppH subfamily. Requires a divalent metal cation as cofactor.

Functionally, accelerates the degradation of transcripts by removing pyrophosphate from the 5'-end of triphosphorylated RNA, leading to a more labile monophosphorylated state that can stimulate subsequent ribonuclease cleavage. This Shewanella sp. (strain MR-7) protein is RNA pyrophosphohydrolase.